The following is a 177-amino-acid chain: Chorismate pyruvate-lyase (177 aa).

Residues Met-36, Arg-78, Leu-116, and Glu-157 each contribute to the substrate site.

Belongs to the UbiC family. Monomer.

The protein resides in the cytoplasm. The catalysed reaction is chorismate = 4-hydroxybenzoate + pyruvate. It participates in cofactor biosynthesis; ubiquinone biosynthesis. Its function is as follows. Removes the pyruvyl group from chorismate, with concomitant aromatization of the ring, to provide 4-hydroxybenzoate (4HB) for the ubiquinone pathway. The sequence is that of Chorismate pyruvate-lyase from Pectobacterium carotovorum subsp. carotovorum (strain PC1).